The primary structure comprises 114 residues: Adapter SH3BGRL (114 aa).

The tract at residues 13-50 is required for interaction with HER2; it reads STAIKKKQQDVLGFLEANKIGFEEKDIAANEENRKWMR. The tract at residues 54 to 71 is required for interaction with PFN1, HER2, and ATG12; sequence PENSRPATGYPLPPQIFN. The short motif at 61–67 is the SH3-binding element; that stretch reads TGYPLPP.

Belongs to the SH3BGR family. In terms of assembly, monomer. Interacts with PFN1/Profilin-1. Interacts with ERBB2. Interacts with ATG12. Interacts with BECN1. Interacts with translating ribosomes. Ubiquitous.

It is found in the cytoplasm. It localises to the cytosol. Its subcellular location is the cell membrane. Functionally, appears to function as an adapter protein that bridges proteins together or proteins with mRNAs. May function as a ubiquitin ligase-substrate adapter. Additionally, associates with translating cytoplasmic ribosomes and may promote the expression of specific mRNAs. In Homo sapiens (Human), this protein is Adapter SH3BGRL.